The primary structure comprises 289 residues: Glyoxylate/succinic semialdehyde reductase 1 (289 aa).

An N-acetylmethionine modification is found at M1. Residues 4-18 and T95 each bind NADP(+); that span reads GFLG…MSMN. Residue K170 is part of the active site. K238 contacts NADP(+).

It belongs to the HIBADH-related family. NP60 subfamily.

It localises to the cytoplasm. The protein localises to the cytosol. It catalyses the reaction glycolate + NADP(+) = glyoxylate + NADPH + H(+). The catalysed reaction is 4-hydroxybutanoate + NADP(+) = succinate semialdehyde + NADPH + H(+). With respect to regulation, the ratio of NADPH/NADP(+) may regulate enzymatic activity. In terms of biological role, catalyzes the NADPH-dependent reduction of glyoxylate to glycolate as well as succinic semialdehyde (SSA) to gamma-hydroxybutyrate in vitro. May function in redox homeostasis and play a role in oxidative stress tolerance by detoxifying glyoxylate and SSA generated in glycolate metabolism and GABA metabolism, respectively. The chain is Glyoxylate/succinic semialdehyde reductase 1 (GLYR1) from Arabidopsis thaliana (Mouse-ear cress).